The chain runs to 208 residues: Glycerol-3-phosphate acyltransferase (208 aa).

5 consecutive transmembrane segments (helical) span residues 3–23 (ILLA…VVVS), 51–71 (KAAI…VWLA), 78–98 (DVAI…PVFF), 115–135 (AVHP…AFFF), and 140–160 (LAAL…FGMP).

The protein belongs to the PlsY family. As to quaternary structure, probably interacts with PlsX.

It is found in the cell inner membrane. It carries out the reaction an acyl phosphate + sn-glycerol 3-phosphate = a 1-acyl-sn-glycero-3-phosphate + phosphate. Its pathway is lipid metabolism; phospholipid metabolism. In terms of biological role, catalyzes the transfer of an acyl group from acyl-phosphate (acyl-PO(4)) to glycerol-3-phosphate (G3P) to form lysophosphatidic acid (LPA). This enzyme utilizes acyl-phosphate as fatty acyl donor, but not acyl-CoA or acyl-ACP. The chain is Glycerol-3-phosphate acyltransferase from Burkholderia orbicola (strain MC0-3).